The chain runs to 332 residues: Cytoskeleton protein RodZ (332 aa).

At 1–111 the chain is on the cytoplasmic side; it reads MNTETTQDTT…LKKSRKKRDG (111 aa). One can recognise an HTH cro/C1-type domain in the interval 19–71; sequence LREARERLGLTQQTIAERLCLKITTVRDIEDGTTPADLAPTFLRGYIRSYAKL. Residues 30-49 constitute a DNA-binding region (H-T-H motif); the sequence is QQTIAERLCLKITTVRDIED. A helical; Signal-anchor for type II membrane protein transmembrane segment spans residues 112–132; that stretch reads WLMIITWLVVLVVLGLTGAWW. Over 133–332 the chain is Periplasmic; the sequence is WQNHQAQQAE…QVARLTLTAE (200 aa). A disordered region spans residues 149 to 225; it reads HASSMQSQTE…PSQANATQSQ (77 aa). Composition is skewed to polar residues over residues 151–160 and 168–182; these read SSMQSQTEGQ and SAPQETSTAGSAATP. Positions 190–225 are enriched in low complexity; the sequence is SATIAATPSTPPSSTTASSAAPSSQSPSQANATQSQ.

It belongs to the RodZ family.

The protein localises to the cell inner membrane. Its function is as follows. Cytoskeletal protein that is involved in cell-shape control through regulation of the length of the long axis. The protein is Cytoskeleton protein RodZ of Pectobacterium atrosepticum (strain SCRI 1043 / ATCC BAA-672) (Erwinia carotovora subsp. atroseptica).